The sequence spans 874 residues: Alanine--tRNA ligase (874 aa).

Residues His-563, His-567, Cys-665, and His-669 each contribute to the Zn(2+) site.

The protein belongs to the class-II aminoacyl-tRNA synthetase family. The cofactor is Zn(2+).

The protein localises to the cytoplasm. The enzyme catalyses tRNA(Ala) + L-alanine + ATP = L-alanyl-tRNA(Ala) + AMP + diphosphate. In terms of biological role, catalyzes the attachment of alanine to tRNA(Ala) in a two-step reaction: alanine is first activated by ATP to form Ala-AMP and then transferred to the acceptor end of tRNA(Ala). Also edits incorrectly charged Ser-tRNA(Ala) and Gly-tRNA(Ala) via its editing domain. The protein is Alanine--tRNA ligase of Actinobacillus pleuropneumoniae serotype 5b (strain L20).